Reading from the N-terminus, the 84-residue chain is U8-theraphotoxin-Hhn1d (84 aa).

The signal sequence occupies residues 1-21; the sequence is MKVVLIVCLVWVMAMMELVSC. 5 disulfides stabilise this stretch: Cys23-Cys35, Cys29-Cys44, Cys34-Cys67, Cys54-Cys75, and Cys69-Cys81.

It belongs to the AVIT (prokineticin) family. Expressed by the venom gland.

The protein localises to the secreted. In Cyriopagopus hainanus (Chinese bird spider), this protein is U8-theraphotoxin-Hhn1d.